We begin with the raw amino-acid sequence, 1641 residues long: Maestro heat-like repeat-containing protein family member 1 (1641 aa).

HEAT repeat units follow at residues 3-41 (ESSMKKLASTLLDAITDKDPLVQEQVCSALCSLGEARPV), 159-198 (VPFLPSVLSSLLPVLGVAKQDTVRVAFCSALQRFSEGALE), 344-382 (CSSPDRLLAFLLPRLDTSNERTRVGTLQVVRHVINSAAA), 385-423 (EDKKPFILSSMRLPLLDTNSKVKRAVVQVISAMAHHGYL), 1048-1086 (PDQLISLLLTMFEALGDPEKNCSRAATVMINCLLQERGG), 1358-1396 (LMLLDSLLESLAARQKDTCASVRRLVLRGLANLASGCPD), and 1605-1641 (QVDLDQLIAALQILLKDPAPEVRTRAAEALGRLVKLA).

It belongs to the MROH1 family. As to quaternary structure, homooligomer; homooligomerizes at lysosome scission sites.

Its subcellular location is the lysosome membrane. Functionally, lysosome fission factor. Recruited to lysosomes by RAB7 (RAB7A or RAB7B) at scission sites and homooligomerizes to mediate the constriction and scission of lysosomal tubules. May sever membranes by inserting amphipathic helices into one bilayer leaflet. Lysosome fission is required to maintain their steady-state number, shape, size, composition and function, and to accomplish regeneration. The protein is Maestro heat-like repeat-containing protein family member 1 of Homo sapiens (Human).